A 693-amino-acid chain; its full sequence is Pentatricopeptide repeat-containing protein At2g19280 (693 aa).

13 PPR repeats span residues 200–234 (LETV…GIFP), 235–269 (SRGV…GRHL), 270–304 (NAAV…GIRP), 305–339 (DIVA…GISQ), 340–370 (DSVS…FRLR), 372–406 (NIFV…GLLP), 407–441 (DCVC…GNPP), 442–476 (SLTT…GLKL), 477–511 (DVVT…GISP), 512–546 (DVAT…GFVP), 547–581 (STLA…RMKP), 582–616 (DVVT…GLKP), and 617–651 (DVVL…GMLP).

This sequence belongs to the PPR family. P subfamily.

The chain is Pentatricopeptide repeat-containing protein At2g19280 from Arabidopsis thaliana (Mouse-ear cress).